Consider the following 189-residue polypeptide: Chitin synthase 2 (189 aa).

This sequence belongs to the chitin synthase family. Class II subfamily.

Its subcellular location is the cell membrane. It carries out the reaction [(1-&gt;4)-N-acetyl-beta-D-glucosaminyl](n) + UDP-N-acetyl-alpha-D-glucosamine = [(1-&gt;4)-N-acetyl-beta-D-glucosaminyl](n+1) + UDP + H(+). Its function is as follows. Polymerizes chitin, a structural polymer of the cell wall and septum, by transferring the sugar moiety of UDP-GlcNAc to the non-reducing end of the growing chitin polymer. The protein is Chitin synthase 2 (chs2) of Aspergillus niger.